The sequence spans 246 residues: Sulfate transporter CysZ (246 aa).

4 helical membrane-spanning segments follow: residues 24–44, 69–89, 148–168, and 214–234; these read LFVL…IGFA, IVWP…FTMV, LLVL…WILF, and LLIP…ATLF.

It belongs to the CysZ family.

The protein localises to the cell inner membrane. Functionally, high affinity, high specificity proton-dependent sulfate transporter, which mediates sulfate uptake. Provides the sulfur source for the cysteine synthesis pathway. The chain is Sulfate transporter CysZ from Pseudomonas aeruginosa (strain ATCC 15692 / DSM 22644 / CIP 104116 / JCM 14847 / LMG 12228 / 1C / PRS 101 / PAO1).